The chain runs to 391 residues: Elongation factor Tu (391 aa).

Residues 10–201 (KPHVNIGTIG…AVDDYIPTPE (192 aa)) enclose the tr-type G domain. Residues 19 to 26 (GHVDHGKT) are G1. GTP is bound at residue 19-26 (GHVDHGKT). A Mg(2+)-binding site is contributed by Thr26. Residues 55–59 (GITIS) are G2. The G3 stretch occupies residues 76 to 79 (DCPG). Residues 76–80 (DCPGH) and 131–134 (NKVD) each bind GTP. A G4 region spans residues 131 to 134 (NKVD). Residues 169–171 (SAL) form a G5 region.

This sequence belongs to the TRAFAC class translation factor GTPase superfamily. Classic translation factor GTPase family. EF-Tu/EF-1A subfamily. Monomer.

The protein resides in the cytoplasm. The enzyme catalyses GTP + H2O = GDP + phosphate + H(+). Its function is as follows. GTP hydrolase that promotes the GTP-dependent binding of aminoacyl-tRNA to the A-site of ribosomes during protein biosynthesis. The sequence is that of Elongation factor Tu from Paracoccus denitrificans (strain Pd 1222).